A 441-amino-acid polypeptide reads, in one-letter code: tRNA-2-methylthio-N(6)-dimethylallyladenosine synthase (441 aa).

Residues lysine 3–glutamine 119 enclose the MTTase N-terminal domain. [4Fe-4S] cluster-binding residues include cysteine 12, cysteine 48, cysteine 82, cysteine 155, cysteine 159, and cysteine 162. The 231-residue stretch at arginine 141–glutamate 371 folds into the Radical SAM core domain. The region spanning glycine 374–aspartate 437 is the TRAM domain.

This sequence belongs to the methylthiotransferase family. MiaB subfamily. Monomer. The cofactor is [4Fe-4S] cluster.

The protein resides in the cytoplasm. The catalysed reaction is N(6)-dimethylallyladenosine(37) in tRNA + (sulfur carrier)-SH + AH2 + 2 S-adenosyl-L-methionine = 2-methylsulfanyl-N(6)-dimethylallyladenosine(37) in tRNA + (sulfur carrier)-H + 5'-deoxyadenosine + L-methionine + A + S-adenosyl-L-homocysteine + 2 H(+). Catalyzes the methylthiolation of N6-(dimethylallyl)adenosine (i(6)A), leading to the formation of 2-methylthio-N6-(dimethylallyl)adenosine (ms(2)i(6)A) at position 37 in tRNAs that read codons beginning with uridine. This chain is tRNA-2-methylthio-N(6)-dimethylallyladenosine synthase, found in Prosthecochloris aestuarii (strain DSM 271 / SK 413).